A 355-amino-acid chain; its full sequence is Molybdenum import ATP-binding protein ModC (355 aa).

The region spanning 1–233 is the ABC transporter domain; that stretch reads MTLIVEAKQR…PSTASDRREA (233 aa). 31 to 38 is an ATP binding site; it reads GRSGSGKT. The Mop domain maps to 291–355; sequence GLSALNILEA…AIIKTVALEA (65 aa).

This sequence belongs to the ABC transporter superfamily. Molybdate importer (TC 3.A.1.8) family. As to quaternary structure, the complex is composed of two ATP-binding proteins (ModC), two transmembrane proteins (ModB) and a solute-binding protein (ModA).

The protein resides in the cell inner membrane. The enzyme catalyses molybdate(out) + ATP + H2O = molybdate(in) + ADP + phosphate + H(+). Part of the ABC transporter complex ModABC involved in molybdenum import. Responsible for energy coupling to the transport system. The polypeptide is Molybdenum import ATP-binding protein ModC (Rhizobium johnstonii (strain DSM 114642 / LMG 32736 / 3841) (Rhizobium leguminosarum bv. viciae)).